We begin with the raw amino-acid sequence, 253 residues long: CD151 antigen (253 aa).

The Cytoplasmic segment spans residues 1–18 (MGEFNEKKATCGTVCLKY). S-palmitoyl cysteine attachment occurs at residues C11 and C15. Residues 19 to 39 (LLFTYNCCFWLAGLAVMAVGI) traverse the membrane as a helical segment. The Extracellular segment spans residues 40-57 (WTLALKSDYISLLASSTY). A helical membrane pass occupies residues 58–78 (LATAYILVVAGVVVMVTGVLG). The Cytoplasmic portion of the chain corresponds to 79–91 (CCATFKERRNLLR). A helical transmembrane segment spans residues 92 to 112 (LYFILLLIIFLLEIIAGILAY). Over 113–221 (VYYQQLNTEL…LESFIQEHLR (109 aa)) the chain is Extracellular. N-linked (GlcNAc...) asparagine glycosylation is present at N159. The chain crosses the membrane as a helical span at residues 222–242 (VIGAVGIGIACVQVFGMIFTC). Residues C242 and C243 are each lipidated (S-palmitoyl cysteine). Topologically, residues 243-253 (CLYRSLKLEHY) are cytoplasmic.

This sequence belongs to the tetraspanin (TM4SF) family. Interacts with integrins ITGA3:ITGB1, ITGA5:ITGB1, ITGA3:ITGB1 and ITGA6:ITGB4 and with CD9 and CD181. Interacts (via the second extracellular domain) with integrin ITGAV:ITGB3. Interacts with ITGA3; this interaction modulates ITGA3 glycosylation pattern. Interacts with F11R. Interacts with RAC1 and CDC42; these interactions mediate physical association of RAC1 and CDC42 with integrin adhesion receptor complexes. Palmitoylated. Palmitoylation by ZDHHC2 regulates CD151 expression, association with other tetraspanin family proteins and function in cell adhesion. Post-translationally, ubiquitinated by RNF128 on lysine residues present in the tetraspanin amino terminus via 'Lys-48'-linked ubiquitin leading to proteasomal degradation.

The protein resides in the cell membrane. In terms of biological role, structural component of specialized membrane microdomains known as tetraspanin-enriched microdomains (TERMs), which act as platforms for receptor clustering and signaling. Plays a role in various cellular and molecular mechanism through its association with both integrin and non-integrin proteins. These interactions facilitate critical cellular functions, including cell-to-cell communication, wound healing, platelet aggregation, trafficking, cell motility, and angiogenesis. Via interaction with JAM-A/F11R and integrin ITGA3:ITGB1, promotes the recruitment of signaling molecules such as RAC1, CDC42 and RhoGTPases to facilitate the polarization of epithelial cells and the reorganization of the actin cytoskeleton, which are critical steps in cell migration process. Regulates the glycosylation pattern of ITGA3:ITGB1 thereby modulating its activity. Plays an essential role in the maintenance of central laminin-binding integrin ITGA6:ITGB4-containing adhesion complexes. Essential for the proper assembly of the glomerular and tubular basement membranes in kidney. Contributes to T-cell activation by modulating integrin signaling leading to activation of downstream targets PTK2 and MAPK1/MAPK3. The chain is CD151 antigen (Cd151) from Rattus norvegicus (Rat).